The chain runs to 209 residues: Small ribosomal subunit protein uS3 (209 aa).

The region spanning 38–107 (IRKFIKNRYY…RVVINIEEIK (70 aa)) is the KH type-2 domain.

The protein belongs to the universal ribosomal protein uS3 family. In terms of assembly, part of the 30S ribosomal subunit. Forms a tight complex with proteins S10 and S14.

Its function is as follows. Binds the lower part of the 30S subunit head. Binds mRNA in the 70S ribosome, positioning it for translation. This chain is Small ribosomal subunit protein uS3, found in Thermotoga petrophila (strain ATCC BAA-488 / DSM 13995 / JCM 10881 / RKU-1).